The sequence spans 258 residues: UPF0246 protein NTHI1156 (258 aa).

This sequence belongs to the UPF0246 family.

This chain is UPF0246 protein NTHI1156, found in Haemophilus influenzae (strain 86-028NP).